We begin with the raw amino-acid sequence, 491 residues long: Lysine--tRNA ligase (491 aa).

Residues Glu400 and Glu407 each coordinate Mg(2+).

The protein belongs to the class-II aminoacyl-tRNA synthetase family. Homodimer. Mg(2+) serves as cofactor.

It is found in the cytoplasm. It carries out the reaction tRNA(Lys) + L-lysine + ATP = L-lysyl-tRNA(Lys) + AMP + diphosphate. This is Lysine--tRNA ligase from Mesomycoplasma hyopneumoniae (strain 7448) (Mycoplasma hyopneumoniae).